Consider the following 463-residue polypeptide: ATP-dependent protease ATPase subunit HslU (463 aa).

ATP-binding positions include Ile-19 and 61–66; that span reads GVGKTE. A disordered region spans residues 154–174; sequence FGGAQNSSQTSDTQEDGEIEK. ATP-binding residues include Asp-277, Glu-341, and Arg-413.

The protein belongs to the ClpX chaperone family. HslU subfamily. As to quaternary structure, a double ring-shaped homohexamer of HslV is capped on each side by a ring-shaped HslU homohexamer. The assembly of the HslU/HslV complex is dependent on binding of ATP.

It is found in the cytoplasm. Functionally, ATPase subunit of a proteasome-like degradation complex; this subunit has chaperone activity. The binding of ATP and its subsequent hydrolysis by HslU are essential for unfolding of protein substrates subsequently hydrolyzed by HslV. HslU recognizes the N-terminal part of its protein substrates and unfolds these before they are guided to HslV for hydrolysis. The chain is ATP-dependent protease ATPase subunit HslU from Bacillus cereus (strain G9842).